A 200-amino-acid polypeptide reads, in one-letter code: Cuticle protein 19.8 (200 aa).

Repeat copies occupy residues 20-23, 26-29, and 43-46. The region spanning 56–127 is the Chitin-binding type R&amp;R domain; sequence HPQYSYGYSV…EPGVHAPIAA (72 aa). The tract at residues 70-89 is disordered; it reads TGDSKSQQESRDGDVVQGSY. 5 repeat units span residues 126–129, 144–147, 150–153, 159–162, and 177–180.

Its function is as follows. Component of the cuticle of migratory locust which contains more than 100 different structural proteins. In Locusta migratoria (Migratory locust), this protein is Cuticle protein 19.8.